A 680-amino-acid polypeptide reads, in one-letter code: MIDRYKHQQLRIGLVSPQQISAWATKIIPNGEIVGEVTKPYTFHYKTNKPEKDGLFCERIFGPIKSGICACGNYRVIGDEKEDPKFCEQCGVEFVDSRIRRYQMGYIKLTCPVTHVWYLKRLPSYIANLLDKPLKELEGLVYCDFSFARPITKKPTFLRLRGSFEYEIQSWKYSIPLFFTTQGFDIFRNREISTGAGAIREQLADLDLRIIIENSLVEWKQLGEEGPTGNEWEDRKIVRRKDFLVRRMELAKHFIRTNIEPEWMVLCLLPVLPPELRPIIQIEGGKLMSSDINELYRRVIYRNNTLTDLLTTSRSTPGELVMCQEKLVQEAVDTLLDNGIRGQPMRDGHNKVYKSFSDVIEGKEGRFRETLLGKRVDYSGRSVIVVGPSLSLHRCGLPREIAIELFQTFVIRGLIRQHLASNIGVAKSQIREKKPIVWEILQEVMQGHPVLLNRAPTLHRLGIQSFQPILVEGRTICLHPLVCKGFNADFDGDQMAVHVPLSLEAQAEARLLMFSHMNLLSPAIGDPISVPTQDMLIGLYVLTSGTRRGICANRYNPCNRKNYQNERIYETNYKYTKEPFFCNSYDAIGAYRQKRIDLDSPLWLRWQLDQRVIASREVPIEVHYESFGNYHEIYAHYLIVRSVKKETFCIYIRTTVGHISFYREIEEAIQGFSQACSYDT.

Residues Cys69, Cys71, Cys87, and Cys90 each contribute to the Zn(2+) site. Positions 489, 491, and 493 each coordinate Mg(2+).

The protein belongs to the RNA polymerase beta' chain family. RpoC1 subfamily. As to quaternary structure, in plastids the minimal PEP RNA polymerase catalytic core is composed of four subunits: alpha, beta, beta', and beta''. When a (nuclear-encoded) sigma factor is associated with the core the holoenzyme is formed, which can initiate transcription. Mg(2+) is required as a cofactor. It depends on Zn(2+) as a cofactor.

Its subcellular location is the plastid. The protein resides in the chloroplast. The catalysed reaction is RNA(n) + a ribonucleoside 5'-triphosphate = RNA(n+1) + diphosphate. Functionally, DNA-dependent RNA polymerase catalyzes the transcription of DNA into RNA using the four ribonucleoside triphosphates as substrates. In Capsella bursa-pastoris (Shepherd's purse), this protein is DNA-directed RNA polymerase subunit beta'.